A 329-amino-acid polypeptide reads, in one-letter code: tRNA-modifying protein YgfZ (329 aa).

The folate site is built by W32 and W190.

The protein belongs to the tRNA-modifying YgfZ family.

Its subcellular location is the cytoplasm. Functionally, folate-binding protein involved in regulating the level of ATP-DnaA and in the modification of some tRNAs. It is probably a key factor in regulatory networks that act via tRNA modification, such as initiation of chromosomal replication. This is tRNA-modifying protein YgfZ from Photobacterium profundum (strain SS9).